The chain runs to 504 residues: Maturase K (504 aa).

It belongs to the intron maturase 2 family. MatK subfamily.

It is found in the plastid. The protein resides in the chloroplast. Its function is as follows. Usually encoded in the trnK tRNA gene intron. Probably assists in splicing its own and other chloroplast group II introns. This chain is Maturase K, found in Vigna mungo (Black gram).